The sequence spans 345 residues: Guanine nucleotide-binding protein alpha-4 subunit (345 aa).

Residues 30-345 form the G-alpha domain; sequence KDVKLLLLGP…TILSQALEHF (316 aa). Positions 33–46 are G1 motif; that stretch reads KLLLLGPGESGKST. GTP-binding positions include 38–45, 171–177, 196–200, 265–268, and A320; these read GPGESGKS, LRCRVRT, DVGGQ, and NKKD. 2 residues coordinate Mg(2+): S45 and T177. The G2 motif stretch occupies residues 169-177; that stretch reads DVLRCRVRT. A G3 motif region spans residues 192–201; sequence LKIVDVGGQR. A G4 motif region spans residues 261–268; it reads VLFLNKKD. The G5 motif stretch occupies residues 318-323; it reads TCAVDT.

Belongs to the G-alpha family. In terms of assembly, g proteins are composed of 3 units; alpha, beta and gamma. The alpha chain contains the guanine nucleotide binding site.

Its function is as follows. Guanine nucleotide-binding proteins (G proteins) are involved as modulators or transducers in various transmembrane signaling systems. G alpha-4 plays a role in morphogenesis of the multicellular structure. The sequence is that of Guanine nucleotide-binding protein alpha-4 subunit (gpaD) from Dictyostelium discoideum (Social amoeba).